We begin with the raw amino-acid sequence, 315 residues long: Lamassu protein LmuA (315 aa).

Component of antiviral defense system Lamassu type I, composed of LmuA and LmuB. Expression of Lamassu type I in B.subtilis (strain BEST7003) confers resistance to phages phi3T, SpBeta and SPR. This is Lamassu protein LmuA from Bacillus sp. (strain NCIM 5461 / CCTCC AB 2011126 / NIO-1130).